The chain runs to 504 residues: Peroxisomal catalase (504 aa).

Residues histidine 63 and asparagine 136 contribute to the active site. Tyrosine 345 is a heme binding site. The Microbody targeting signal signature appears at 502–504 (NKF).

Belongs to the catalase family. It depends on heme as a cofactor.

It is found in the peroxisome matrix. It catalyses the reaction 2 H2O2 = O2 + 2 H2O. In terms of biological role, catalyzes the degradation of hydrogen peroxide (H(2)O(2)) generated by peroxisomal oxidases to water and oxygen, thereby protecting cells from the toxic effects of hydrogen peroxide. This chain is Peroxisomal catalase (CTA1), found in Candida boidinii (Yeast).